The following is a 211-amino-acid chain: Dephospho-CoA kinase (211 aa).

Positions 7 to 211 constitute a DPCK domain; it reads LIGVIGRSGA…ILTRRGVLGE (205 aa). 15 to 20 contributes to the ATP binding site; that stretch reads GAGKNV.

Belongs to the CoaE family.

Its subcellular location is the cytoplasm. It catalyses the reaction 3'-dephospho-CoA + ATP = ADP + CoA + H(+). It participates in cofactor biosynthesis; coenzyme A biosynthesis; CoA from (R)-pantothenate: step 5/5. In terms of biological role, catalyzes the phosphorylation of the 3'-hydroxyl group of dephosphocoenzyme A to form coenzyme A. The chain is Dephospho-CoA kinase from Treponema pallidum (strain Nichols).